The chain runs to 179 residues: Probable splicing factor, arginine/serine-rich 6 (179 aa).

Residues 3-76 (AKVYVGGLPS…VRARVELSTG (74 aa)) enclose the RRM domain. Residues 75-179 (TGQRRGGGGR…RSRSRSASPH (105 aa)) form a disordered region. Residues 78–93 (RRGGGGRGGGFGGRGG) show a composition bias toward gly residues. The span at 94 to 160 (GGRDRSPYRG…RSPQERDRSH (67 aa)) shows a compositional bias: basic and acidic residues. A compositionally biased stretch (basic residues) spans 161–173 (SKSRSRSRSRSRS).

It belongs to the splicing factor SR family. In terms of processing, extensively phosphorylated on serine residues in the RS domain.

The protein resides in the nucleus. Functionally, plays a functionally redundant role in shifting germ cell sexual differentiation in hermaprodites. Required for the development of somatic gonad structures and for progression from larval stage to adulthood. This chain is Probable splicing factor, arginine/serine-rich 6 (rsp-6), found in Caenorhabditis elegans.